The primary structure comprises 323 residues: Lipoyl synthase (323 aa).

7 residues coordinate [4Fe-4S] cluster: C65, C70, C76, C91, C95, C98, and S304. The 217-residue stretch at 77–293 (FNNGTATFMI…KKEALSIGFT (217 aa)) folds into the Radical SAM core domain.

It belongs to the radical SAM superfamily. Lipoyl synthase family. [4Fe-4S] cluster serves as cofactor.

The protein resides in the cytoplasm. The catalysed reaction is [[Fe-S] cluster scaffold protein carrying a second [4Fe-4S](2+) cluster] + N(6)-octanoyl-L-lysyl-[protein] + 2 oxidized [2Fe-2S]-[ferredoxin] + 2 S-adenosyl-L-methionine + 4 H(+) = [[Fe-S] cluster scaffold protein] + N(6)-[(R)-dihydrolipoyl]-L-lysyl-[protein] + 4 Fe(3+) + 2 hydrogen sulfide + 2 5'-deoxyadenosine + 2 L-methionine + 2 reduced [2Fe-2S]-[ferredoxin]. Its pathway is protein modification; protein lipoylation via endogenous pathway; protein N(6)-(lipoyl)lysine from octanoyl-[acyl-carrier-protein]: step 2/2. Catalyzes the radical-mediated insertion of two sulfur atoms into the C-6 and C-8 positions of the octanoyl moiety bound to the lipoyl domains of lipoate-dependent enzymes, thereby converting the octanoylated domains into lipoylated derivatives. In Buchnera aphidicola subsp. Acyrthosiphon pisum (strain 5A), this protein is Lipoyl synthase.